We begin with the raw amino-acid sequence, 283 residues long: Bifunctional protein FolD (283 aa).

Residues 164–166 (GRS), S189, and I230 contribute to the NADP(+) site.

The protein belongs to the tetrahydrofolate dehydrogenase/cyclohydrolase family. In terms of assembly, homodimer.

It carries out the reaction (6R)-5,10-methylene-5,6,7,8-tetrahydrofolate + NADP(+) = (6R)-5,10-methenyltetrahydrofolate + NADPH. The catalysed reaction is (6R)-5,10-methenyltetrahydrofolate + H2O = (6R)-10-formyltetrahydrofolate + H(+). The protein operates within one-carbon metabolism; tetrahydrofolate interconversion. Its function is as follows. Catalyzes the oxidation of 5,10-methylenetetrahydrofolate to 5,10-methenyltetrahydrofolate and then the hydrolysis of 5,10-methenyltetrahydrofolate to 10-formyltetrahydrofolate. This chain is Bifunctional protein FolD, found in Lactobacillus delbrueckii subsp. bulgaricus (strain ATCC 11842 / DSM 20081 / BCRC 10696 / JCM 1002 / NBRC 13953 / NCIMB 11778 / NCTC 12712 / WDCM 00102 / Lb 14).